The following is a 145-amino-acid chain: MFSPTSRLRSATADTFALVVYCFIIGMAIEIMLSGMSFEQSLSSRLLSIPVNIAIAWPYGLYRDRVLNMAKRHGGDHFLVRSVADLFAYVSFQSPVYAAILWVIGASSAQILTAVTSNLVISMVMGVTYGYFLEYCRRLFRVALP.

Helical transmembrane passes span 16–36 (FALV…LSGM), 42–62 (LSSR…YGLY), 86–106 (LFAY…VIGA), and 111–131 (ILTA…TYGY).

This sequence belongs to the AlaE exporter family.

It is found in the cell inner membrane. Its function is as follows. Exports L-alanine. This is L-alanine exporter AlaE from Pectobacterium parmentieri (strain WPP163) (Pectobacterium wasabiae (strain WPP163)).